Here is a 167-residue protein sequence, read N- to C-terminus: Endoribonuclease YbeY (167 aa).

His131, His135, and His141 together coordinate Zn(2+).

It belongs to the endoribonuclease YbeY family. It depends on Zn(2+) as a cofactor.

The protein resides in the cytoplasm. Its function is as follows. Single strand-specific metallo-endoribonuclease involved in late-stage 70S ribosome quality control and in maturation of the 3' terminus of the 16S rRNA. The chain is Endoribonuclease YbeY from Rickettsia rickettsii (strain Iowa).